Reading from the N-terminus, the 517-residue chain is Ribose import ATP-binding protein RbsA 2 (517 aa).

ABC transporter domains follow at residues 10–245 (LRIE…GRSI) and 255–498 (DAGE…VSTH). 42-49 (GENGAGKS) serves as a coordination point for ATP. The interval 497–517 (THTGNSPHSGGTDGTEASRGH) is disordered.

Belongs to the ABC transporter superfamily. Ribose importer (TC 3.A.1.2.1) family. In terms of assembly, the complex is composed of an ATP-binding protein (RbsA), two transmembrane proteins (RbsC) and a solute-binding protein (RbsB).

The protein resides in the cell membrane. It catalyses the reaction D-ribose(out) + ATP + H2O = D-ribose(in) + ADP + phosphate + H(+). Its function is as follows. Part of the ABC transporter complex RbsABC involved in ribose import. Responsible for energy coupling to the transport system. This chain is Ribose import ATP-binding protein RbsA 2, found in Streptomyces coelicolor (strain ATCC BAA-471 / A3(2) / M145).